Consider the following 125-residue polypeptide: Translation initiation factor 5A (125 aa).

Lysine 35 bears the Hypusine mark.

This sequence belongs to the eIF-5A family.

The protein localises to the cytoplasm. Functionally, functions by promoting the formation of the first peptide bond. In Methanoregula boonei (strain DSM 21154 / JCM 14090 / 6A8), this protein is Translation initiation factor 5A (eIF5A).